The following is a 269-amino-acid chain: RBPJ-interacting and tubulin-associated protein 1 (269 aa).

Positions V5 to L17 match the Nuclear export signal motif. Disordered regions lie at residues V66–H105 and L141–K269. The span at C80–L92 shows a compositional bias: polar residues. Positions L92–S108 match the Nuclear localization signal motif. Positions R128–P156 are interaction with RBPJ/RBPSUH. Positions P156 to K269 are interaction with tubulin. A compositionally biased stretch (polar residues) spans H200 to S253.

Belongs to the RITA family. In terms of assembly, interacts with RBPJ/RBPSUH.

The protein resides in the cytoplasm. Its subcellular location is the nucleus. It localises to the cytoskeleton. It is found in the microtubule organizing center. The protein localises to the centrosome. In terms of biological role, tubulin-binding protein that acts as a negative regulator of Notch signaling pathway. Shuttles between the cytoplasm and the nucleus and mediates the nuclear export of RBPJ/RBPSUH, thereby preventing the interaction between RBPJ/RBPSUH and NICD product of Notch proteins (Notch intracellular domain), leading to down-regulate Notch-mediated transcription. May play a role in neurogenesis. The polypeptide is RBPJ-interacting and tubulin-associated protein 1 (RITA1) (Homo sapiens (Human)).